Consider the following 240-residue polypeptide: Large ribosomal subunit protein uL2 (240 aa).

The span at 1 to 10 (MGHRISTQSR) shows a compositional bias: polar residues. Disordered stretches follow at residues 1–20 (MGHRISTQSRGKGGPTYRAP) and 204–240 (FGGGGHQHPGKPKTVARGASPGRKVGSVAARRTGYRR).

This sequence belongs to the universal ribosomal protein uL2 family. In terms of assembly, part of the 50S ribosomal subunit. Forms a bridge to the 30S subunit in the 70S ribosome.

One of the primary rRNA binding proteins. Required for association of the 30S and 50S subunits to form the 70S ribosome, for tRNA binding and peptide bond formation. It has been suggested to have peptidyltransferase activity; this is somewhat controversial. Makes several contacts with the 16S rRNA in the 70S ribosome. The polypeptide is Large ribosomal subunit protein uL2 (Methanocorpusculum labreanum (strain ATCC 43576 / DSM 4855 / Z)).